Consider the following 515-residue polypeptide: MGSLGEVVEHGVSKDMLPFDGHPDPVVDELNRLENLLREKDRELGHAYSEIKGLKVTEALKDKAIAELTKELKKQDEKLSSLEKQLEQKNLDVKRLSNERKEALSAQFAAEATLRRIHSSQKDEEVVPFDAIIAPLESDIKAYRHEIALLQDDKKALERHLKLKEAALVEAGNILRSALERALIVEDVQNQNIELKKQMEIYHEENKLLEKSNRQQVLDIERLTHTIAELEESILSTGDVANAVRFYQNQAAKLNEEKRTLERELARAKVYVNRVASTTANEWKDDADKLMPVKRWLEERRLLQGEIQRLRDKIAMAEKSAKAEAQLNDKLRRKLKALEDDMRNESSNTSASNKDNATSKQATPKRSSSQPRRPIISADGADKRRPASQPRASVSGKVLNKQPGSETEAAEKNRHAAAKRFDSPRSAKSVAAGGRGERPVRSHLWAHRSKVADDAGKENKEQNPNYKAHLGDSHADGDCGVQCSEHEEAMDLRKLDEGKADDSDAVKSTKDSCEI.

Coiled coils occupy residues 26–106 and 136–351; these read VVDE…ALSA and LESD…NTSA. Residues 208 to 410 are required for targeting to microtubules; the sequence is LLEKSNRQQV…KQPGSETEAA (203 aa). Residues 340–515 form a disordered region; it reads DDMRNESSNT…VKSTKDSCEI (176 aa). The segment covering 345 to 362 has biased composition (polar residues); that stretch reads ESSNTSASNKDNATSKQA. Residues 364-374 are compositionally biased toward low complexity; the sequence is PKRSSSQPRRP. 3 stretches are compositionally biased toward basic and acidic residues: residues 409 to 425, 450 to 461, and 484 to 515; these read AAEK…DSPR, KVADDAGKENKE, and SEHE…SCEI.

It belongs to the MAP70 family.

The protein localises to the cytoplasm. The protein resides in the cytoskeleton. In terms of biological role, plant-specific protein that interact with microtubules. This chain is Microtubule-associated protein 70-4 (MAP70.4), found in Oryza sativa subsp. japonica (Rice).